The chain runs to 104 residues: Large ribosomal subunit protein uL24 (104 aa).

The protein belongs to the universal ribosomal protein uL24 family. In terms of assembly, part of the 50S ribosomal subunit.

One of two assembly initiator proteins, it binds directly to the 5'-end of the 23S rRNA, where it nucleates assembly of the 50S subunit. In terms of biological role, one of the proteins that surrounds the polypeptide exit tunnel on the outside of the subunit. This chain is Large ribosomal subunit protein uL24, found in Brevibacillus brevis (strain 47 / JCM 6285 / NBRC 100599).